The following is a 614-amino-acid chain: UvrABC system protein C (614 aa).

Positions 14–91 (TSPGCYIHKD…IKENKPKYNI (78 aa)) constitute a GIY-YIG domain. The UVR domain maps to 196-231 (DKIIDDLKSKMAVAAQSMEFERAAEYRDLIQAIGTL). Residues 595 to 614 (LPQVAEERVDYQTEGNHNEP) are disordered. Positions 599–614 (AEERVDYQTEGNHNEP) are enriched in basic and acidic residues.

This sequence belongs to the UvrC family. As to quaternary structure, interacts with UvrB in an incision complex.

It localises to the cytoplasm. In terms of biological role, the UvrABC repair system catalyzes the recognition and processing of DNA lesions. UvrC both incises the 5' and 3' sides of the lesion. The N-terminal half is responsible for the 3' incision and the C-terminal half is responsible for the 5' incision. The protein is UvrABC system protein C of Streptococcus pneumoniae serotype 4 (strain ATCC BAA-334 / TIGR4).